The sequence spans 863 residues: Leucine--tRNA ligase (863 aa).

Positions 42–52 (PYPSGKIHMGH) match the 'HIGH' region motif. Residues 618–622 (KMSKS) carry the 'KMSKS' region motif. K621 provides a ligand contact to ATP.

Belongs to the class-I aminoacyl-tRNA synthetase family.

It localises to the cytoplasm. It catalyses the reaction tRNA(Leu) + L-leucine + ATP = L-leucyl-tRNA(Leu) + AMP + diphosphate. This Desulforapulum autotrophicum (strain ATCC 43914 / DSM 3382 / VKM B-1955 / HRM2) (Desulfobacterium autotrophicum) protein is Leucine--tRNA ligase.